The chain runs to 73 residues: Putative membrane protein insertion efficiency factor (73 aa).

It belongs to the UPF0161 family.

It localises to the cell inner membrane. Functionally, could be involved in insertion of integral membrane proteins into the membrane. In Treponema denticola (strain ATCC 35405 / DSM 14222 / CIP 103919 / JCM 8153 / KCTC 15104), this protein is Putative membrane protein insertion efficiency factor.